The primary structure comprises 139 residues: uncharacterized protein (139 aa).

This is an uncharacterized protein from Invertebrate iridescent virus 6 (IIV-6).